The chain runs to 200 residues: Small ribosomal subunit protein uS4 (200 aa).

Positions serine 92 to valine 155 constitute an S4 RNA-binding domain.

This sequence belongs to the universal ribosomal protein uS4 family. Part of the 30S ribosomal subunit. Contacts protein S5. The interaction surface between S4 and S5 is involved in control of translational fidelity.

Functionally, one of the primary rRNA binding proteins, it binds directly to 16S rRNA where it nucleates assembly of the body of the 30S subunit. With S5 and S12 plays an important role in translational accuracy. This chain is Small ribosomal subunit protein uS4, found in Staphylococcus epidermidis (strain ATCC 35984 / DSM 28319 / BCRC 17069 / CCUG 31568 / BM 3577 / RP62A).